Reading from the N-terminus, the 176-residue chain is Large ribosomal subunit protein uL30 (176 aa).

The protein belongs to the universal ribosomal protein uL30 family. Part of the 50S ribosomal subunit.

This is Large ribosomal subunit protein uL30 from Pyrobaculum arsenaticum (strain DSM 13514 / JCM 11321 / PZ6).